The chain runs to 450 residues: Protein indeterminate-domain 13 (450 aa).

Serine 54 bears the Phosphoserine mark. 2 C2H2-type zinc fingers span residues phenylalanine 64 to histidine 86 and tyrosine 106 to histidine 136. A Nuclear localization signal motif is present at residues isoleucine 128–lysine 135. A C2H2-type 2; degenerate zinc finger spans residues tryptophan 141–serine 165. 8 residues coordinate Zn(2+): cysteine 143, cysteine 146, histidine 159, cysteine 163, cysteine 170, cysteine 172, histidine 185, and cysteine 189. The CCHC-type 2; atypical zinc-finger motif lies at phenylalanine 168 to valine 191. Residues arginine 178–aspartate 190 are SHR-binding. Over residues phenylalanine 248–asparagine 263 the composition is skewed to polar residues. Residues phenylalanine 248–valine 280 are disordered.

It is found in the nucleus. Functionally, probable transcription factor. In Arabidopsis thaliana (Mouse-ear cress), this protein is Protein indeterminate-domain 13.